Reading from the N-terminus, the 1438-residue chain is DNA-directed RNA polymerase subunit beta' (1438 aa).

Residues Cys-70, Cys-72, Cys-85, and Cys-88 each contribute to the Zn(2+) site. Positions 461, 463, and 465 each coordinate Mg(2+). Residues Cys-821, Cys-895, Cys-902, and Cys-905 each contribute to the Zn(2+) site. The segment covering 1413-1427 (DAMAAAMGGDSAGGD) has biased composition (low complexity). Residues 1413-1438 (DAMAAAMGGDSAGGDTKPEAPEASEE) form a disordered region.

This sequence belongs to the RNA polymerase beta' chain family. The RNAP catalytic core consists of 2 alpha, 1 beta, 1 beta' and 1 omega subunit. When a sigma factor is associated with the core the holoenzyme is formed, which can initiate transcription. The cofactor is Mg(2+). Zn(2+) serves as cofactor.

It carries out the reaction RNA(n) + a ribonucleoside 5'-triphosphate = RNA(n+1) + diphosphate. In terms of biological role, DNA-dependent RNA polymerase catalyzes the transcription of DNA into RNA using the four ribonucleoside triphosphates as substrates. The chain is DNA-directed RNA polymerase subunit beta' from Erythrobacter litoralis (strain HTCC2594).